A 246-amino-acid chain; its full sequence is Lipoprotein-releasing system ATP-binding protein LolD 1 (246 aa).

One can recognise an ABC transporter domain in the interval 6 to 244; sequence LKLERIRKDL…ASVTNEAASL (239 aa). 43–50 contributes to the ATP binding site; it reads GPSGSGKS.

It belongs to the ABC transporter superfamily. Lipoprotein translocase (TC 3.A.1.125) family. The complex is composed of two ATP-binding proteins (LolD) and two transmembrane proteins (LolC and LolE).

It is found in the cell inner membrane. Functionally, part of the ABC transporter complex LolCDE involved in the translocation of mature outer membrane-directed lipoproteins, from the inner membrane to the periplasmic chaperone, LolA. Responsible for the formation of the LolA-lipoprotein complex in an ATP-dependent manner. In Chlorobium chlorochromatii (strain CaD3), this protein is Lipoprotein-releasing system ATP-binding protein LolD 1.